Reading from the N-terminus, the 243-residue chain is Venom nerve growth factor (243 aa).

The first 18 residues, 1–18 (MSMLCYTLIIAFLIGIWA), serve as a signal peptide directing secretion. Residues 19 to 125 (APKSEDNVPL…TLNRNIRTKR (107 aa)) constitute a propeptide that is removed on maturation. The tract at residues 45-66 (HEGLKTSRNTDQRHLAPKKAED) is disordered. Residues 46-66 (EGLKTSRNTDQRHLAPKKAED) show a composition bias toward basic and acidic residues. Intrachain disulfides connect cysteine 139–cysteine 204, cysteine 182–cysteine 232, and cysteine 192–cysteine 234. Asparagine 148 carries an N-linked (GlcNAc...) asparagine glycan.

It belongs to the NGF-beta family. Homodimer; non-covalently linked. As to expression, expressed by the venom gland.

It is found in the secreted. Nerve growth factor is important for the development and maintenance of the sympathetic and sensory nervous systems. It stimulates division and differentiation of sympathetic and embryonic sensory neurons as well as basal forebrain cholinergic neurons in the brain. Its relevance in the snake venom is not clear. However, it has been shown to inhibit metalloproteinase-dependent proteolysis of platelet glycoprotein Ib alpha, suggesting a metalloproteinase inhibition to prevent metalloprotease autodigestion and/or protection against prey proteases. Binds a lipid between the two protein chains in the homodimer. The lipid-bound form promotes histamine relase from mouse mast cells, contrary to the lipid-free form. In Cryptophis nigrescens (Eastern small-eyed snake), this protein is Venom nerve growth factor.